The following is a 154-amino-acid chain: Ribosome maturation factor RimP (154 aa).

This sequence belongs to the RimP family.

It is found in the cytoplasm. Functionally, required for maturation of 30S ribosomal subunits. In Carboxydothermus hydrogenoformans (strain ATCC BAA-161 / DSM 6008 / Z-2901), this protein is Ribosome maturation factor RimP.